Reading from the N-terminus, the 316-residue chain is tRNA dimethylallyltransferase (316 aa).

17-24 (GPTASGKT) is an ATP binding site. 19 to 24 (TASGKT) is a substrate binding site. 4 interaction with substrate tRNA regions span residues 42–45 (DSVL), 166–170 (QRLSR), 247–252 (RCVGYR), and 280–287 (KRQITWLR).

Belongs to the IPP transferase family. In terms of assembly, monomer. The cofactor is Mg(2+).

It catalyses the reaction adenosine(37) in tRNA + dimethylallyl diphosphate = N(6)-dimethylallyladenosine(37) in tRNA + diphosphate. Catalyzes the transfer of a dimethylallyl group onto the adenine at position 37 in tRNAs that read codons beginning with uridine, leading to the formation of N6-(dimethylallyl)adenosine (i(6)A). The chain is tRNA dimethylallyltransferase from Shigella flexneri.